Consider the following 305-residue polypeptide: Ornithine carbamoyltransferase, anabolic (305 aa).

Residues 53–56 (STRT), Q80, R104, and 131–134 (HPCQ) contribute to the carbamoyl phosphate site. Residues N162, D219, and 223–224 (SM) each bind L-ornithine. Carbamoyl phosphate contacts are provided by residues 259–260 (CL) and R287.

The protein belongs to the aspartate/ornithine carbamoyltransferase superfamily. OTCase family. As to quaternary structure, homotrimer.

It is found in the cytoplasm. The catalysed reaction is carbamoyl phosphate + L-ornithine = L-citrulline + phosphate + H(+). Its pathway is amino-acid biosynthesis; L-arginine biosynthesis; L-arginine from L-ornithine and carbamoyl phosphate: step 1/3. Its function is as follows. Reversibly catalyzes the transfer of the carbamoyl group from carbamoyl phosphate (CP) to the N(epsilon) atom of ornithine (ORN) to produce L-citrulline, which is a substrate for argininosuccinate synthetase (ArgG) involved in the final step in arginine biosynthesis. The protein is Ornithine carbamoyltransferase, anabolic of Pseudomonas aeruginosa (strain ATCC 15692 / DSM 22644 / CIP 104116 / JCM 14847 / LMG 12228 / 1C / PRS 101 / PAO1).